Consider the following 367-residue polypeptide: Glutamate 5-kinase (367 aa).

K9 is a binding site for ATP. Residues S49, D136, and N148 each coordinate substrate. Residues 168–169 and 210–216 contribute to the ATP site; these read TD and TGGMKSK. Residues 276–350 form the PUA domain; it reads SGQIEVDAGA…GMQSQDIQAR (75 aa).

Belongs to the glutamate 5-kinase family.

The protein localises to the cytoplasm. It catalyses the reaction L-glutamate + ATP = L-glutamyl 5-phosphate + ADP. It participates in amino-acid biosynthesis; L-proline biosynthesis; L-glutamate 5-semialdehyde from L-glutamate: step 1/2. Catalyzes the transfer of a phosphate group to glutamate to form L-glutamate 5-phosphate. In Bacillus mycoides (strain KBAB4) (Bacillus weihenstephanensis), this protein is Glutamate 5-kinase.